Consider the following 451-residue polypeptide: MLKKNDIVEVEISDLSHDGAGIAKVDGLVFFVDNALPTEKIRMRVLKVKKNIAFGKVESYLAKSAYRSDNLTVDYLRTGIADLGHLTYGQQLNFKRKQVINSLSKIAGISDIEVADTLGMDNPTAYRNKAQVPVRRVNGQLETGFFRKNSHALMPIEDYYIQDKEIDRLINFTRDLLRRFDLKPYDEKEQTGLIRNLVVRRGHYTGQIMLVLVTTRSKIFRIEQMIEKIISEFPAVKSIIQNINDRNTNAIFGSEFRTLYGEDTIEDTMLGNRYIISAQSFYQVNTVMAEKLYQTAIDFSDLTPDDTVIDAYSGIGTIGLSFAKKVKDVYGVEVIEAAVRDAEKNAALNNITNVHYVADSAEKAMASWSKRGIKPDVILVDPPRKGLTESFIEASTAMQPRKITYISCAPATMARDVKLYEELGYKLVKVQPVDLFPQTHHVECVALLVKA.

The 59-residue stretch at 1-59 (MLKKNDIVEVEISDLSHDGAGIAKVDGLVFFVDNALPTEKIRMRVLKVKKNIAFGKVES) folds into the TRAM domain. The S-adenosyl-L-methionine site is built by Gln-283, Tyr-312, Glu-333, and Asp-381. Cys-408 acts as the Nucleophile in catalysis.

The protein belongs to the class I-like SAM-binding methyltransferase superfamily. RNA M5U methyltransferase family.

This is an uncharacterized protein from Streptococcus mutans serotype c (strain ATCC 700610 / UA159).